A 577-amino-acid chain; its full sequence is Beta-fructofuranosidase, insoluble isoenzyme 1 (577 aa).

A signal peptide spans 1-22 (MGTRLLALAPWLLLLLLQLAGA). Asp-63 is an active-site residue. Asn-158, Asn-183, and Asn-333 each carry an N-linked (GlcNAc...) asparagine glycan.

It belongs to the glycosyl hydrolase 32 family.

It localises to the secreted. The protein localises to the extracellular space. The protein resides in the apoplast. Its subcellular location is the cell wall. The catalysed reaction is Hydrolysis of terminal non-reducing beta-D-fructofuranoside residues in beta-D-fructofuranosides.. May play a role in sucrose partitioning during seed development and in stress response. This Oryza sativa subsp. indica (Rice) protein is Beta-fructofuranosidase, insoluble isoenzyme 1 (CIN1).